Consider the following 355-residue polypeptide: Receptor-like serine/threonine-protein kinase At1g78530 (355 aa).

Over 1-8 the chain is Extracellular; it reads MANAKETT. The chain crosses the membrane as a helical span at residues 9–29; sequence FYITISVVAFVIGKIVIALLF. Over 30-355 the chain is Cytoplasmic; sequence YKRWKRKHTI…YIKLSTRSSF (326 aa). Residues 75–347 form the Protein kinase domain; the sequence is LSNKDILGSG…TEVVKLLEYI (273 aa). Residues 81 to 89 and Lys103 contribute to the ATP site; that span reads LGSGGFGTV. Tyr148 carries the post-translational modification Phosphotyrosine. Asp197 (proton acceptor) is an active-site residue. 2 positions are modified to phosphoserine: Ser201 and Ser230. A phosphothreonine mark is found at Thr231 and Thr236. Position 244 is a phosphotyrosine (Tyr244).

Belongs to the protein kinase superfamily. Ser/Thr protein kinase family.

It localises to the cell membrane. It catalyses the reaction L-seryl-[protein] + ATP = O-phospho-L-seryl-[protein] + ADP + H(+). The enzyme catalyses L-threonyl-[protein] + ATP = O-phospho-L-threonyl-[protein] + ADP + H(+). The protein is Receptor-like serine/threonine-protein kinase At1g78530 of Arabidopsis thaliana (Mouse-ear cress).